The following is a 435-amino-acid chain: Virulence factor PIT1 (435 aa).

A run of 5 helical transmembrane segments spans residues 33–53, 77–97, 111–131, 143–163, and 204–224; these read ETTT…SEVI, IFFI…ILVT, WAWT…CVIG, VASW…MWTN, and TFWF…ACCI. N-linked (GlcNAc...) asparagine glycosylation occurs at Asn-330. The segment covering 392–404 has biased composition (polar residues); it reads SPQMPSKAQSQSI. Residues 392–435 form a disordered region; it reads SPQMPSKAQSQSIPYKREVEVTVDMSPVPPPPGPSPAPLPAPYM. Residues 418–435 are compositionally biased toward pro residues; it reads PVPPPPGPSPAPLPAPYM.

Post-translationally, O-mannosylated by PMT4. Is also N-glycosylated.

The protein resides in the cell membrane. Its function is as follows. Plasma membrane virulence factor required for spreading and inducing tumors in infected leaves. The chain is Virulence factor PIT1 from Mycosarcoma maydis (Corn smut fungus).